Consider the following 296-residue polypeptide: Nucleotide-binding protein Pnuc_1915 (296 aa).

Residue 8–15 (GISGSGKS) participates in ATP binding. 57–60 (DARR) is a GTP binding site.

It belongs to the RapZ-like family.

In terms of biological role, displays ATPase and GTPase activities. This Polynucleobacter asymbioticus (strain DSM 18221 / CIP 109841 / QLW-P1DMWA-1) (Polynucleobacter necessarius subsp. asymbioticus) protein is Nucleotide-binding protein Pnuc_1915.